The primary structure comprises 130 residues: ATP synthase epsilon chain (130 aa).

Belongs to the ATPase epsilon chain family. F-type ATPases have 2 components, CF(1) - the catalytic core - and CF(0) - the membrane proton channel. CF(1) has five subunits: alpha(3), beta(3), gamma(1), delta(1), epsilon(1). CF(0) has three main subunits: a, b and c.

The protein resides in the cell inner membrane. Its function is as follows. Produces ATP from ADP in the presence of a proton gradient across the membrane. This is ATP synthase epsilon chain from Campylobacter hominis (strain ATCC BAA-381 / DSM 21671 / CCUG 45161 / LMG 19568 / NCTC 13146 / CH001A).